The sequence spans 321 residues: Putative ankyrin repeat domain-containing protein 26-like protein (321 aa).

ANK repeat units follow at residues 48–78 (KHLG…DLDE), 82–111 (KKRT…QLDV), 115–144 (KNRT…DPDL), 148–177 (YGNT…NIES), and 181–210 (DELT…NLTA). Disordered regions lie at residues 222–242 (EYKE…GTSN) and 268–321 (FNKP…NENI). The segment covering 229-242 (PRNPQNSNPEGTSN) has biased composition (polar residues).

This is Putative ankyrin repeat domain-containing protein 26-like protein (ANKRD26P1) from Homo sapiens (Human).